A 569-amino-acid polypeptide reads, in one-letter code: Pyruvate decarboxylase (569 aa).

Residues D38 and H124 each coordinate pyruvate. Residues T398 and 421 to 423 (GSI) contribute to the thiamine diphosphate site. D451 serves as a coordination point for Mg(2+). Thiamine diphosphate is bound by residues 452–453 (GS) and 478–483 (NEGYTI). The Mg(2+) site is built by N478 and G480. E484 is a binding site for pyruvate.

This sequence belongs to the TPP enzyme family. Homotetramer. Mg(2+) serves as cofactor. The cofactor is thiamine diphosphate.

It catalyses the reaction a 2-oxocarboxylate + H(+) = an aldehyde + CO2. The enzyme catalyses pyruvate + H(+) = acetaldehyde + CO2. The sequence is that of Pyruvate decarboxylase (pdcA) from Aspergillus fumigatus (strain ATCC MYA-4609 / CBS 101355 / FGSC A1100 / Af293) (Neosartorya fumigata).